A 406-amino-acid polypeptide reads, in one-letter code: MSGGMQNGTQETERRVIDINDRHTVNVGPQHPATHGVLRLIMELEGETVTRADPHIGLLHRGTEKLIEYKSYLQAVPYFDRLDYVSPMCCEHAFALATERLLGVKVPERAQWIRVLFAEITRILNHLLNAVHLALDIGAQSPSLWGYEEREKLLTFHEAVSGARFHANYFRPGGVSKDMPTGLAEQIWEWSEKFPKFLDDLQSLLNENRIFRQRLVDIGVISAEDALAMGFSGPNLRASGIAWDLRRAQPYDKYDEVDFDIPVGRHGDSFDRYLVRIREMAESLKIIRQALKAMPEGPIKVQDHKITPPKRAEMKRSMEALIHHFKLYTEGYHVPAGTTYTAVEAPKGEFGVYLVADGSNRPYRCKIRATGFSHLQAMNLMSKGHLLADAIAVLGSIDIVFGEVDR.

This sequence belongs to the complex I 49 kDa subunit family. In terms of assembly, NDH-1 is composed of 14 different subunits. Subunits NuoB, C, D, E, F, and G constitute the peripheral sector of the complex.

It localises to the cell inner membrane. The enzyme catalyses a quinone + NADH + 5 H(+)(in) = a quinol + NAD(+) + 4 H(+)(out). NDH-1 shuttles electrons from NADH, via FMN and iron-sulfur (Fe-S) centers, to quinones in the respiratory chain. The immediate electron acceptor for the enzyme in this species is believed to be ubiquinone. Couples the redox reaction to proton translocation (for every two electrons transferred, four hydrogen ions are translocated across the cytoplasmic membrane), and thus conserves the redox energy in a proton gradient. This is NADH-quinone oxidoreductase subunit D from Acidiphilium cryptum (strain JF-5).